Here is a 158-residue protein sequence, read N- to C-terminus: tRNA (cytidine(34)-2'-O)-methyltransferase (158 aa).

Residues glycine 103, isoleucine 123, and serine 131 each contribute to the S-adenosyl-L-methionine site.

This sequence belongs to the class IV-like SAM-binding methyltransferase superfamily. RNA methyltransferase TrmH family. TrmL subfamily. As to quaternary structure, homodimer.

It localises to the cytoplasm. It catalyses the reaction cytidine(34) in tRNA + S-adenosyl-L-methionine = 2'-O-methylcytidine(34) in tRNA + S-adenosyl-L-homocysteine + H(+). It carries out the reaction 5-carboxymethylaminomethyluridine(34) in tRNA(Leu) + S-adenosyl-L-methionine = 5-carboxymethylaminomethyl-2'-O-methyluridine(34) in tRNA(Leu) + S-adenosyl-L-homocysteine + H(+). Methylates the ribose at the nucleotide 34 wobble position in the two leucyl isoacceptors tRNA(Leu)(CmAA) and tRNA(Leu)(cmnm5UmAA). Catalyzes the methyl transfer from S-adenosyl-L-methionine to the 2'-OH of the wobble nucleotide. The chain is tRNA (cytidine(34)-2'-O)-methyltransferase from Ancylobacter novellus (strain ATCC 8093 / DSM 506 / JCM 20403 / CCM 1077 / IAM 12100 / NBRC 12443 / NCIMB 10456) (Starkeya novella).